The following is a 79-amino-acid chain: MKLTCMMLVAVLFLTAWTFVTANVSRNGLENLFPEERHEMMNPNAAKLNNRDCVKAGTACGFPKPEPACCSSWCIFVCT.

Positions 1–22 (MKLTCMMLVAVLFLTAWTFVTA) are cleaved as a signal peptide. The propeptide occupies 23-51 (NVSRNGLENLFPEERHEMMNPNAAKLNNR). 3 cysteine pairs are disulfide-bonded: Cys53/Cys70, Cys60/Cys74, and Cys69/Cys78.

It belongs to the conotoxin O1 superfamily. In terms of tissue distribution, expressed by the venom duct.

The protein resides in the secreted. In Conus leopardus (Leopard cone), this protein is Conotoxin Leo-O4.